A 154-amino-acid chain; its full sequence is Nuclear cap-binding protein subunit 2 (154 aa).

The disordered stretch occupies residues 1 to 23; sequence MTASVDLSSYRDQHFKGSRSEQE. The segment covering 9–23 has biased composition (basic and acidic residues); sequence SYRDQHFKGSRSEQE. Residues Tyr10, Tyr33, 102-106, 113-117, and 123-124 contribute to the mRNA site; these read RVDWD, RQYGR, and QV. Residues 30–108 enclose the RRM domain; the sequence is TTLYVGNLSF…RLIRVDWDAG (79 aa).

The protein belongs to the RRM NCBP2 family. As to quaternary structure, component of the nuclear cap-binding complex (CBC), a heterodimer composed of Cbp80 and Cbp20 that interacts with m7GpppG-capped RNA. Interacts with Ars2.

The protein localises to the nucleus. Component of the cap-binding complex (CBC), which binds co-transcriptionally to the 5' cap of pre-mRNAs and is involved in various processes such as pre-mRNA splicing and RNA-mediated gene silencing (RNAi). The CBC complex is involved in miRNA-mediated RNA interference via its interaction with Ars2 and is required for primary microRNAs (miRNAs) processing. Also involved in innate immunity via the short interfering RNAs (siRNAs) processing machinery by restricting the viral RNA production. In the CBC complex, Cbp20 recognizes and binds capped RNAs (m7GpppG-capped RNA) but requires Cbp80 to stabilize the movement of its N-terminal loop and lock the CBC into a high affinity cap-binding state with the cap structure. The chain is Nuclear cap-binding protein subunit 2 (Cbp20) from Drosophila grimshawi (Hawaiian fruit fly).